The primary structure comprises 357 residues: Homoserine kinase (357 aa).

The protein belongs to the GHMP kinase family. Homoserine kinase subfamily.

The catalysed reaction is L-homoserine + ATP = O-phospho-L-homoserine + ADP + H(+). The protein operates within amino-acid biosynthesis; L-threonine biosynthesis; L-threonine from L-aspartate: step 4/5. Commits homoserine to the threonine biosynthesis pathway by catalyzing its O-phosphorylation. The chain is Homoserine kinase from Cryptococcus neoformans var. grubii serotype A (strain H99 / ATCC 208821 / CBS 10515 / FGSC 9487) (Filobasidiella neoformans var. grubii).